The following is a 247-amino-acid chain: tRNA pseudouridine synthase A (247 aa).

Asp53 serves as the catalytic Nucleophile. Tyr111 is a substrate binding site.

This sequence belongs to the tRNA pseudouridine synthase TruA family. In terms of assembly, homodimer.

The enzyme catalyses uridine(38/39/40) in tRNA = pseudouridine(38/39/40) in tRNA. Formation of pseudouridine at positions 38, 39 and 40 in the anticodon stem and loop of transfer RNAs. The polypeptide is tRNA pseudouridine synthase A (Lacticaseibacillus casei (strain BL23) (Lactobacillus casei)).